Consider the following 197-residue polypeptide: MATEEFRGHAVRMSTQGSQPGAAPDSVAGTAGLPSGQSGGAGLRLGERPPPAMEKRGPYLVTRAPSIQAKLKKHRDHAKAVLRRKGMLGALTNRPDSSGKRSVKFNKGYTALSQSPDENLVSLDSDSDGELESRYSSGYSSAEQVNQDVSRQLLQDGYHLDEIPDDEDLDLIPPKPIASSACSCCWCCLGDSSCTLQ.

2 disordered regions span residues 1–77 (MATE…HRDH) and 117–142 (DENL…YSSA). Phosphoserine occurs at positions 14, 125, and 127.

It belongs to the FAM219 family.

In Mus musculus (Mouse), this protein is Protein FAM219B (Fam219b).